Reading from the N-terminus, the 719-residue chain is Nucleolar complex protein 2 homolog (719 aa).

Positions 1–24 are enriched in basic residues; that stretch reads MKLLKKSSSLKKGVTKRAKLQKKP. 3 disordered regions span residues 1 to 67, 86 to 136, and 643 to 719; these read MKLL…GMKK, LQQE…TKIK, and ALEN…SDED. Positions 25-42 are enriched in basic and acidic residues; the sequence is PSKDEASSSDEELAKLDG. Over residues 89–130 the composition is skewed to acidic residues; the sequence is EDADLLNMEEDEDDDEEGEDNEDEEDEEEEEESDEDDDEEDD. Residues 643-661 are compositionally biased toward basic and acidic residues; sequence ALENSKKDDKKKKKEEEAA.

This sequence belongs to the NOC2 family.

It is found in the nucleus. Functionally, required for normal somatic gonad development and for regulation of germline development and proliferation. The protein is Nucleolar complex protein 2 homolog (pro-2) of Caenorhabditis briggsae.